The sequence spans 231 residues: RNA pyrophosphohydrolase (231 aa).

The Nudix hydrolase domain occupies 6–149; that stretch reads GFRPNVGIIL…KRDVYQLALT (144 aa). The Nudix box signature appears at 38–59; that stretch reads GGIKYGETPEQAMYRELHEEIG. The segment at 168 to 200 is disordered; that stretch reads VHHGRHGSGQRYAQQPGQPPTLAQRRPLQPVTQ.

It belongs to the Nudix hydrolase family. RppH subfamily. The cofactor is a divalent metal cation.

Functionally, accelerates the degradation of transcripts by removing pyrophosphate from the 5'-end of triphosphorylated RNA, leading to a more labile monophosphorylated state that can stimulate subsequent ribonuclease cleavage. The protein is RNA pyrophosphohydrolase of Cupriavidus pinatubonensis (strain JMP 134 / LMG 1197) (Cupriavidus necator (strain JMP 134)).